The chain runs to 497 residues: Catalase-2 (497 aa).

Active-site residues include His71 and Asn144. Tyr354 contributes to the heme binding site.

The protein belongs to the catalase family. Heme serves as cofactor.

The catalysed reaction is 2 H2O2 = O2 + 2 H2O. In terms of biological role, catalase involved in the oxidative stress response serving to protect cells from toxicity. For instance plays a role in defending against oxidative damage induced by excessive copper stress. Not required for maintaining normal lifespan. The protein is Catalase-2 of Caenorhabditis elegans.